The primary structure comprises 512 residues: MSLSDKELFELNKKAVTEGFKIKPRINYNTVGGVNGPLVILDNVKFPRYNEIVNLTLPDGSVRQGQVLEVRGTKAIVQVFEGTSGIDVKKTRVEFTGENLKIPVSEDMLGRIFDGSGRPIDKGPKIFAEDYLDINGSPINPYARIYPEEMISTGVSAIDTMNSIARGQKIPIFSASGLPHNEIAAQICRQAGLVRPTKDVHDGHEENFSIVFAAMGVNLETSRFFKQDFEENGSLERTTLFLNLANDPTIERIITPRLALTTAEFLAYQTERHVLTILTDMSSYADALREVSAAREEVPGRRGYPGYMYTDLSTIYERAGRVEGRNGSITQVPILTMPNDDITHPIPDLTGYITEGQIFIDRQLHNRGIYPPINVLPSLSRLMKSAIGEGMTRKDHGDVSNQLYAKYAIGKDAAAMKAVVGEEALSTEDKLSLEFLEKFEKNFISQGAYENRSIFESLDLAWSLLRIYPKELLNRISPKILEELYGRDREQDDDEDEDEEDPDKSGDKLIDA.

ATP is bound at residue Arg381. Residues 484–512 (LYGRDREQDDDEDEDEEDPDKSGDKLIDA) form a disordered region. Positions 491-502 (QDDDEDEDEEDP) are enriched in acidic residues. Over residues 503-512 (DKSGDKLIDA) the composition is skewed to basic and acidic residues.

The protein belongs to the ATPase alpha/beta chains family. In terms of assembly, V-ATPase is a heteromultimeric enzyme composed of a peripheral catalytic V1 complex (components A to H) attached to an integral membrane V0 proton pore complex (components: a, c, c', c'', d, e, f and VOA1).

Its subcellular location is the vacuole membrane. Functionally, non-catalytic subunit of the V1 complex of vacuolar(H+)-ATPase (V-ATPase), a multisubunit enzyme composed of a peripheral complex (V1) that hydrolyzes ATP and a membrane integral complex (V0) that translocates protons. Plays an important role in resistance to several stresses, as well as in autophagy and virulence. This is V-type proton ATPase subunit B from Candida albicans (strain SC5314 / ATCC MYA-2876) (Yeast).